The sequence spans 549 residues: Chaperonin GroEL 2 (549 aa).

ATP contacts are provided by residues 30-33, lysine 51, 87-91, glycine 415, 479-481, and aspartate 495; these read TLGP, DGTTT, and NAA.

It belongs to the chaperonin (HSP60) family. In terms of assembly, forms a cylinder of 14 subunits composed of two heptameric rings stacked back-to-back. Interacts with the co-chaperonin GroES.

Its subcellular location is the cytoplasm. It carries out the reaction ATP + H2O + a folded polypeptide = ADP + phosphate + an unfolded polypeptide.. In terms of biological role, together with its co-chaperonin GroES, plays an essential role in assisting protein folding. The GroEL-GroES system forms a nano-cage that allows encapsulation of the non-native substrate proteins and provides a physical environment optimized to promote and accelerate protein folding. The protein is Chaperonin GroEL 2 of Polaromonas naphthalenivorans (strain CJ2).